The following is a 489-amino-acid chain: MLFLPADTGHPTGVAAASGPHVRSPVARAVRAMEPRCPPPCGCCERLVLNVAGLRFETRARTLGRFPDTLLGDPVRRSRFYDGARREYFFDRHRPSFDAVLYYYQSGGRLRRPAHVPLDVFLEEVSFYGLGAAALARLREDEGCAVPPERPLPRRAFARQLWLLFEFPESSQAARVLAVVSVLVILVSIVVFCLETLPDFRDDRDDPGLAPVAAATGPFLARLNGSSPMPGAPPRQPFNDPFFVVETLCICWFSFELLVRLVACPSKAVFFKNVMNLIDFVAILPYFVALGTELARQRGVGQPAMSLAILRVIRLVRVFRIFKLSRHSKGLQILGQTLRASMRELGLLIFFLFIGVVLFSSAVYFAEVDRVDTHFTSIPESFWWAVVTMTTVGYGDMAPVTVGGKIVGSLCAIAGVLTISLPVPVIVSNFSYFYHRETEGEEAGMYSHVDTQPCGTLEGKANGGLVDSEVPELLPPLWPPAGKHMVTEV.

The chain crosses the membrane as a helical span at residues 176–196 (VLAVVSVLVILVSIVVFCLET). N-linked (GlcNAc...) asparagine glycosylation occurs at Asn224. Residues 242–262 (FFVVETLCICWFSFELLVRLV) traverse the membrane as a helical segment. Residue Cys264 is the site of S-palmitoyl cysteine attachment. A helical transmembrane segment spans residues 274-294 (VMNLIDFVAILPYFVALGTEL). A helical; Voltage-sensor transmembrane segment spans residues 309–328 (ILRVIRLVRVFRIFKLSRHS). A helical transmembrane segment spans residues 345–365 (LGLLIFFLFIGVVLFSSAVYF). The short motif at 391–396 (TVGYGD) is the Selectivity filter element. The helical transmembrane segment at 406–426 (IVGSLCAIAGVLTISLPVPVI) threads the bilayer.

This sequence belongs to the potassium channel family. A (Shaker) (TC 1.A.1.2) subfamily. Kv1.7/KCNA7 sub-subfamily. As to quaternary structure, heterotetramer of potassium channel proteins. Detected in heart, skeletal muscle, brain, and pancreatic islet cells.

The protein localises to the membrane. It catalyses the reaction K(+)(in) = K(+)(out). In terms of biological role, mediates the voltage-dependent potassium ion permeability of excitable membranes. Assuming opened or closed conformations in response to the voltage difference across the membrane, the protein forms a potassium-selective channel through which potassium ions may pass in accordance with their electrochemical gradient. Channels formed by isoform 1 inactivate faster than channels formed by isoform 2. The polypeptide is Potassium voltage-gated channel subfamily A member 7 (Kcna7) (Mus musculus (Mouse)).